The sequence spans 90 residues: Aminoacyl carrier protein 1 (90 aa).

The Carrier domain occupies 6–84 (TDVRNRIIKL…TLERMVMTQL (79 aa)). At serine 42 the chain carries O-(pantetheine 4'-phosphoryl)serine.

4'-phosphopantetheine is transferred from CoA to a specific serine of the apo-form of this carrier protein.

Its function is as follows. Aminoacyl carrier protein. Can be charged with L-glycine via the formation of a thioester bond between the amino acid and the 4'-phosphopantetheinyl prosthetic group, catalyzed by the bll0957 ligase. The polypeptide is Aminoacyl carrier protein 1 (Bradyrhizobium diazoefficiens (strain JCM 10833 / BCRC 13528 / IAM 13628 / NBRC 14792 / USDA 110)).